Reading from the N-terminus, the 342-residue chain is Holliday junction branch migration complex subunit RuvB (342 aa).

Residues 1 to 182 (MRIEALNTAP…FGINSRLDYY (182 aa)) are large ATPase domain (RuvB-L). ATP contacts are provided by residues isoleucine 21, arginine 22, glycine 63, lysine 66, threonine 67, threonine 68, 129–131 (EDY), arginine 172, tyrosine 182, and arginine 219. Threonine 67 is a binding site for Mg(2+). A small ATPAse domain (RuvB-S) region spans residues 183–253 (SPELLQSIIV…VARRTLESLE (71 aa)). The tract at residues 256-342 (EGGLDDMDKK…DHGPLFDHNS (87 aa)) is head domain (RuvB-H). DNA contacts are provided by arginine 311 and arginine 316.

This sequence belongs to the RuvB family. In terms of assembly, homohexamer. Forms an RuvA(8)-RuvB(12)-Holliday junction (HJ) complex. HJ DNA is sandwiched between 2 RuvA tetramers; dsDNA enters through RuvA and exits via RuvB. An RuvB hexamer assembles on each DNA strand where it exits the tetramer. Each RuvB hexamer is contacted by two RuvA subunits (via domain III) on 2 adjacent RuvB subunits; this complex drives branch migration. In the full resolvosome a probable DNA-RuvA(4)-RuvB(12)-RuvC(2) complex forms which resolves the HJ.

It localises to the cytoplasm. The catalysed reaction is ATP + H2O = ADP + phosphate + H(+). Functionally, the RuvA-RuvB-RuvC complex processes Holliday junction (HJ) DNA during genetic recombination and DNA repair, while the RuvA-RuvB complex plays an important role in the rescue of blocked DNA replication forks via replication fork reversal (RFR). RuvA specifically binds to HJ cruciform DNA, conferring on it an open structure. The RuvB hexamer acts as an ATP-dependent pump, pulling dsDNA into and through the RuvAB complex. RuvB forms 2 homohexamers on either side of HJ DNA bound by 1 or 2 RuvA tetramers; 4 subunits per hexamer contact DNA at a time. Coordinated motions by a converter formed by DNA-disengaged RuvB subunits stimulates ATP hydrolysis and nucleotide exchange. Immobilization of the converter enables RuvB to convert the ATP-contained energy into a lever motion, pulling 2 nucleotides of DNA out of the RuvA tetramer per ATP hydrolyzed, thus driving DNA branch migration. The RuvB motors rotate together with the DNA substrate, which together with the progressing nucleotide cycle form the mechanistic basis for DNA recombination by continuous HJ branch migration. Branch migration allows RuvC to scan DNA until it finds its consensus sequence, where it cleaves and resolves cruciform DNA. This chain is Holliday junction branch migration complex subunit RuvB, found in Chlorobaculum parvum (strain DSM 263 / NCIMB 8327) (Chlorobium vibrioforme subsp. thiosulfatophilum).